A 156-amino-acid polypeptide reads, in one-letter code: ATP synthase subunit b (156 aa).

Residues 7–27 traverse the membrane as a helical segment; that stretch reads LIAQFVVFFILAGFTMKFVWP.

The protein belongs to the ATPase B chain family. In terms of assembly, F-type ATPases have 2 components, F(1) - the catalytic core - and F(0) - the membrane proton channel. F(1) has five subunits: alpha(3), beta(3), gamma(1), delta(1), epsilon(1). F(0) has three main subunits: a(1), b(2) and c(10-14). The alpha and beta chains form an alternating ring which encloses part of the gamma chain. F(1) is attached to F(0) by a central stalk formed by the gamma and epsilon chains, while a peripheral stalk is formed by the delta and b chains.

The protein resides in the cell inner membrane. Functionally, f(1)F(0) ATP synthase produces ATP from ADP in the presence of a proton or sodium gradient. F-type ATPases consist of two structural domains, F(1) containing the extramembraneous catalytic core and F(0) containing the membrane proton channel, linked together by a central stalk and a peripheral stalk. During catalysis, ATP synthesis in the catalytic domain of F(1) is coupled via a rotary mechanism of the central stalk subunits to proton translocation. Its function is as follows. Component of the F(0) channel, it forms part of the peripheral stalk, linking F(1) to F(0). The chain is ATP synthase subunit b from Herminiimonas arsenicoxydans.